Here is a 539-residue protein sequence, read N- to C-terminus: GMP synthase [glutamine-hydrolyzing] (539 aa).

A Glutamine amidotransferase type-1 domain is found at 20 to 215 (TILILDFGSQ…AIEICHAKPN (196 aa)). Catalysis depends on C96, which acts as the Nucleophile. Active-site residues include H189 and E191. The GMPS ATP-PPase domain maps to 216–413 (WSMENFVDKE…LGIEHSLVWR (198 aa)). An ATP-binding site is contributed by 244–250 (SGGVDST). 4 residues coordinate XMP: R317, D475, K531, and E537.

Homodimer. Mg(2+) is required as a cofactor.

Its subcellular location is the cytoplasm. It is found in the cytosol. The catalysed reaction is XMP + L-glutamine + ATP + H2O = GMP + L-glutamate + AMP + diphosphate + 2 H(+). Its pathway is purine metabolism; GMP biosynthesis; GMP from XMP (L-Gln route): step 1/1. Its function is as follows. Catalyzes the conversion of xanthine monophosphate (XMP) to GMP in the presence of glutamine and ATP through an adenyl-XMP intermediate. The chain is GMP synthase [glutamine-hydrolyzing] from Schizosaccharomyces pombe (strain 972 / ATCC 24843) (Fission yeast).